Consider the following 326-residue polypeptide: Chain length determinant protein (326 aa).

Residues 1-31 (MRVENNNVSGQNHDPEQIDLIDLLVQLWRGK) are Cytoplasmic-facing. A helical membrane pass occupies residues 32–52 (MTIIISVIVAIALAIGYLAVA). The Periplasmic portion of the chain corresponds to 53 to 295 (KEKWTSTAII…LPIRRDSPKK (243 aa)). Residues 296–316 (AITLILAVLLGGMVGAGIVLG) form a helical membrane-spanning segment. The Cytoplasmic segment spans residues 317 to 326 (RNALRNYNAK).

It belongs to the WzzB/Cld/Rol family. In terms of assembly, homodimer.

Its subcellular location is the cell inner membrane. It functions in the pathway bacterial outer membrane biogenesis; lipopolysaccharide biosynthesis. In terms of biological role, confers a modal distribution of chain length on the O-antigen component of lipopolysaccharide (LPS). Gives rise to a reduced number of short chain molecules and increases in numbers of longer molecules. This chain is Chain length determinant protein (wzzB), found in Escherichia coli (strain K12).